A 413-amino-acid polypeptide reads, in one-letter code: Inactive squalene synthase 2 (413 aa).

Position 2 is an N-acetylglycine (G2). Helical transmembrane passes span 283-303 and 390-410; these read AIFQ…ALCY and AIFV…LKAN.

It belongs to the phytoene/squalene synthase family. Mg(2+) is required as a cofactor. The cofactor is Mn(2+). In terms of tissue distribution, mostly expressed in hypocotyls, leaves and cotyledons, and, to a lower extent, in stems.

Its subcellular location is the endoplasmic reticulum membrane. This is Inactive squalene synthase 2 from Arabidopsis thaliana (Mouse-ear cress).